Here is a 372-residue protein sequence, read N- to C-terminus: MKQQLVFEAPRRAMPPQHLADLDETARAAAVTELGLPAFRAKQLANQYYGRLIADPQQMTDLPAAVRDQVAEKLFPTLINPVREIQCDAGETRKTLWRAIDGSTFESVLMRYPQRNTVCISSQAGCGMACPFCATGQGGLQRNLTTAEILEQVRAASSTMRAEHFGRTAGTAGGGRLSNIVFMGMGEPLANYNRVLGAVRRIIAAPPNGFGISARSVTVSTVGLAPAIRKLADERLGVTLALSLHAPDDELRDTLVPVNNRWKVSEVLDAARYYADTTGRRVSIEYALIRDVNDQPWRADLLGKKLHGALGPLAHVNVIPLNPTPGSEWDASPKPAEREFVKRVRERGVSCTVRDTRGREIAAACGQLAAEG.

Glu106 acts as the Proton acceptor in catalysis. The Radical SAM core domain maps to 112 to 359; the sequence is YPQRNTVCIS…SCTVRDTRGR (248 aa). Residues Cys119 and Cys365 are joined by a disulfide bond. [4Fe-4S] cluster is bound by residues Cys126, Cys130, and Cys133. S-adenosyl-L-methionine is bound by residues 186 to 187, Ser220, 243 to 245, and Asn322; these read GE and SLH. Cys365 (S-methylcysteine intermediate) is an active-site residue.

It belongs to the radical SAM superfamily. RlmN family. It depends on [4Fe-4S] cluster as a cofactor.

Its subcellular location is the cytoplasm. The catalysed reaction is adenosine(2503) in 23S rRNA + 2 reduced [2Fe-2S]-[ferredoxin] + 2 S-adenosyl-L-methionine = 2-methyladenosine(2503) in 23S rRNA + 5'-deoxyadenosine + L-methionine + 2 oxidized [2Fe-2S]-[ferredoxin] + S-adenosyl-L-homocysteine. It catalyses the reaction adenosine(37) in tRNA + 2 reduced [2Fe-2S]-[ferredoxin] + 2 S-adenosyl-L-methionine = 2-methyladenosine(37) in tRNA + 5'-deoxyadenosine + L-methionine + 2 oxidized [2Fe-2S]-[ferredoxin] + S-adenosyl-L-homocysteine. In terms of biological role, specifically methylates position 2 of adenine 2503 in 23S rRNA and position 2 of adenine 37 in tRNAs. The protein is Probable dual-specificity RNA methyltransferase RlmN of Mycolicibacterium smegmatis (strain ATCC 700084 / mc(2)155) (Mycobacterium smegmatis).